We begin with the raw amino-acid sequence, 675 residues long: Probable potassium transport system protein Kup (675 aa).

The next 12 membrane-spanning stretches (helical) occupy residues 12–32 (LGML…PLYV), 55–75 (VSLI…LVAL), 98–118 (WLIF…TLTP), 143–163 (WLVP…QVLG), 170–190 (SFGP…LLNI), 216–236 (MGIF…ALYS), 249–269 (TWPF…AWML), 296–316 (IAMI…LITG), 345–365 (IYIG…VWLF), 374–394 (AYGL…SQWV), 401–421 (FWSL…LVAS), and 428–448 (GGYL…VWFF).

It belongs to the HAK/KUP transporter (TC 2.A.72) family.

It is found in the cell membrane. It catalyses the reaction K(+)(in) + H(+)(in) = K(+)(out) + H(+)(out). Its function is as follows. Transport of potassium into the cell. Likely operates as a K(+):H(+) symporter. The chain is Probable potassium transport system protein Kup from Levilactobacillus brevis (strain ATCC 367 / BCRC 12310 / CIP 105137 / JCM 1170 / LMG 11437 / NCIMB 947 / NCTC 947) (Lactobacillus brevis).